Here is a 193-residue protein sequence, read N- to C-terminus: RNA pyrophosphohydrolase (193 aa).

The Nudix hydrolase domain maps to 6–149 (GFRPNVGIIL…KRDVYQRALQ (144 aa)). The Nudix box motif lies at 38 to 59 (GGIKFGETPEQAMFRELEEEVG). The interval 174-193 (THSARKTDEPSTEQTKPNNE) is disordered.

Belongs to the Nudix hydrolase family. RppH subfamily. A divalent metal cation is required as a cofactor.

In terms of biological role, accelerates the degradation of transcripts by removing pyrophosphate from the 5'-end of triphosphorylated RNA, leading to a more labile monophosphorylated state that can stimulate subsequent ribonuclease cleavage. The polypeptide is RNA pyrophosphohydrolase (Herminiimonas arsenicoxydans).